The sequence spans 783 residues: Endonuclease MutS2 (783 aa).

328–335 (GPNTGGKT) lines the ATP pocket. A Smr domain is found at 708 to 783 (LDLRGKRYEE…GSGCTIATLG (76 aa)).

The protein belongs to the DNA mismatch repair MutS family. MutS2 subfamily. In terms of assembly, homodimer. Binds to stalled ribosomes, contacting rRNA.

Functionally, endonuclease that is involved in the suppression of homologous recombination and thus may have a key role in the control of bacterial genetic diversity. Its function is as follows. Acts as a ribosome collision sensor, splitting the ribosome into its 2 subunits. Detects stalled/collided 70S ribosomes which it binds and splits by an ATP-hydrolysis driven conformational change. Acts upstream of the ribosome quality control system (RQC), a ribosome-associated complex that mediates the extraction of incompletely synthesized nascent chains from stalled ribosomes and their subsequent degradation. Probably generates substrates for RQC. The sequence is that of Endonuclease MutS2 from Streptococcus thermophilus (strain ATCC BAA-491 / LMD-9).